Consider the following 289-residue polypeptide: Nodulation protein NolT (289 aa).

An N-terminal signal peptide occupies residues 1-33 (MFGSAHGDTTSSDTSGRRPLRLVVLPLLLALSS). Cys-34 carries the N-palmitoyl cysteine lipid modification. Residue Cys-34 is the site of S-diacylglycerol cysteine attachment. A helical membrane pass occupies residues 233-253 (VAVGVSAAVFAVTCYLLFIVL).

The protein belongs to the YscJ lipoprotein family.

The protein resides in the cell outer membrane. The chain is Nodulation protein NolT (nolT) from Sinorhizobium fredii (strain NBRC 101917 / NGR234).